The primary structure comprises 213 residues: tRNA (guanine-N(7)-)-methyltransferase (213 aa).

S-adenosyl-L-methionine contacts are provided by Glu-44, Glu-69, Asn-96, and Asp-118. Residue Asp-118 is part of the active site. Lys-122 contributes to the substrate binding site. Residues 124-129 form an interaction with RNA region; it reads RHEKRR. Substrate contacts are provided by residues Asp-154 and 191 to 194; that span reads TEYE.

The protein belongs to the class I-like SAM-binding methyltransferase superfamily. TrmB family.

The enzyme catalyses guanosine(46) in tRNA + S-adenosyl-L-methionine = N(7)-methylguanosine(46) in tRNA + S-adenosyl-L-homocysteine. Its pathway is tRNA modification; N(7)-methylguanine-tRNA biosynthesis. Catalyzes the formation of N(7)-methylguanine at position 46 (m7G46) in tRNA. The sequence is that of tRNA (guanine-N(7)-)-methyltransferase from Bacillus licheniformis (strain ATCC 14580 / DSM 13 / JCM 2505 / CCUG 7422 / NBRC 12200 / NCIMB 9375 / NCTC 10341 / NRRL NRS-1264 / Gibson 46).